A 488-amino-acid chain; its full sequence is GTPase Der (488 aa).

EngA-type G domains lie at 3-166 and 193-366; these read PVIA…PRDP and IKIA…MSAV. Residues 9-16, 56-60, 118-121, 199-206, 246-250, and 311-314 each bind GTP; these read GRPNVGKS, DTGGI, NKID, DTAGV, and NKWD. The region spanning 367-451 is the KH-like domain; that stretch reads TRWPTSRLTQ…PIRIEYKGGD (85 aa). Residues 449–461 are compositionally biased toward basic and acidic residues; that stretch reads GGDNPFEGKKNTL. The tract at residues 449-488 is disordered; the sequence is GGDNPFEGKKNTLTDRQVNKKRRLMSHHKKAEKKRRDKRK. Residues 467–488 are compositionally biased toward basic residues; the sequence is NKKRRLMSHHKKAEKKRRDKRK.

This sequence belongs to the TRAFAC class TrmE-Era-EngA-EngB-Septin-like GTPase superfamily. EngA (Der) GTPase family. As to quaternary structure, associates with the 50S ribosomal subunit.

In terms of biological role, GTPase that plays an essential role in the late steps of ribosome biogenesis. This is GTPase Der from Pseudomonas entomophila (strain L48).